A 295-amino-acid chain; its full sequence is Light-independent protochlorophyllide reductase iron-sulfur ATP-binding protein (295 aa).

Residues 39-44 and Lys68 contribute to the ATP site; that span reads GIGKST. Ser43 lines the Mg(2+) pocket. Residues Cys124 and Cys158 each coordinate [4Fe-4S] cluster. 209–210 serves as a coordination point for ATP; that stretch reads NR.

This sequence belongs to the NifH/BchL/ChlL family. As to quaternary structure, homodimer. Protochlorophyllide reductase is composed of three subunits; ChlL, ChlN and ChlB. [4Fe-4S] cluster serves as cofactor.

The catalysed reaction is chlorophyllide a + oxidized 2[4Fe-4S]-[ferredoxin] + 2 ADP + 2 phosphate = protochlorophyllide a + reduced 2[4Fe-4S]-[ferredoxin] + 2 ATP + 2 H2O. Its pathway is porphyrin-containing compound metabolism; chlorophyll biosynthesis (light-independent). Functionally, component of the dark-operative protochlorophyllide reductase (DPOR) that uses Mg-ATP and reduced ferredoxin to reduce ring D of protochlorophyllide (Pchlide) to form chlorophyllide a (Chlide). This reaction is light-independent. The L component serves as a unique electron donor to the NB-component of the complex, and binds Mg-ATP. The chain is Light-independent protochlorophyllide reductase iron-sulfur ATP-binding protein from Prochlorococcus marinus (strain MIT 9215).